The primary structure comprises 310 residues: MFQHTTVLLKEAVDGLHIKPDGIYVDCTLGGGGHSEYLLSQLSEDGRLFAFDQDDMAIEYAKKRLARYEKQVTFIRRNFRFLAEELTARGVHRVDGILFDLGVSSPQLDTPERGFSYHHDAPLDMRMNREQSLTAYDIVNHWPYEELVHIFFHYGEEKFSKQVARKIEEVRKEKRIETTGQLVDIIKEAIPAPARRSGGHPAKRIFQAIRIAVNDELQAFKEAITQAIDLLKSGGRISVITFHSLEDRICKVAFKEASQGPQLPPGLPLIPDQYRPALKIITKKPIVPSEEEIEHNHRARSAKLRIAEKL.

Residues 32–34 (GGH), aspartate 52, alanine 83, aspartate 100, and glutamine 107 each bind S-adenosyl-L-methionine.

The protein belongs to the methyltransferase superfamily. RsmH family.

The protein resides in the cytoplasm. It carries out the reaction cytidine(1402) in 16S rRNA + S-adenosyl-L-methionine = N(4)-methylcytidine(1402) in 16S rRNA + S-adenosyl-L-homocysteine + H(+). Specifically methylates the N4 position of cytidine in position 1402 (C1402) of 16S rRNA. The polypeptide is Ribosomal RNA small subunit methyltransferase H (Geobacillus sp. (strain WCH70)).